A 179-amino-acid polypeptide reads, in one-letter code: Large ribosomal subunit protein uL6 (179 aa).

Belongs to the universal ribosomal protein uL6 family. As to quaternary structure, part of the 50S ribosomal subunit.

Its function is as follows. This protein binds to the 23S rRNA, and is important in its secondary structure. It is located near the subunit interface in the base of the L7/L12 stalk, and near the tRNA binding site of the peptidyltransferase center. The chain is Large ribosomal subunit protein uL6 from Acaryochloris marina (strain MBIC 11017).